We begin with the raw amino-acid sequence, 252 residues long: Clc-like protein 2 (252 aa).

Helical transmembrane passes span Tyr-7 to Trp-29, Leu-91 to Val-111, Val-127 to Ser-147, and Ile-173 to Leu-193.

Belongs to the Clc family.

It localises to the membrane. This is Clc-like protein 2 (clc-2) from Caenorhabditis elegans.